A 577-amino-acid polypeptide reads, in one-letter code: Aspartate--tRNA(Asp/Asn) ligase (577 aa).

Glu171 is an L-aspartate binding site. Residues 195 to 198 are aspartate; the sequence is QLFK. L-aspartate is bound at residue Arg217. ATP contacts are provided by residues 217 to 219 and Gln226; that span reads RDE. His444 serves as a coordination point for L-aspartate. An ATP-binding site is contributed by Glu474. Arg481 serves as a coordination point for L-aspartate. ATP is bound at residue 526-529; the sequence is GFDR.

Belongs to the class-II aminoacyl-tRNA synthetase family. Type 1 subfamily. In terms of assembly, homodimer.

The protein resides in the cytoplasm. It carries out the reaction tRNA(Asx) + L-aspartate + ATP = L-aspartyl-tRNA(Asx) + AMP + diphosphate. Its function is as follows. Aspartyl-tRNA synthetase with relaxed tRNA specificity since it is able to aspartylate not only its cognate tRNA(Asp) but also tRNA(Asn). Is 1.7 times more efficient at aminoacylating tRNA(Asp) over tRNA(Asn). Reaction proceeds in two steps: L-aspartate is first activated by ATP to form Asp-AMP and then transferred to the acceptor end of tRNA(Asp/Asn). This chain is Aspartate--tRNA(Asp/Asn) ligase, found in Helicobacter pylori (strain ATCC 700392 / 26695) (Campylobacter pylori).